A 372-amino-acid chain; its full sequence is Mannan endo-1,4-beta-mannosidase 8 (372 aa).

Substrate-binding residues include tryptophan 57 and asparagine 172. Residue glutamate 173 is the Proton donor of the active site. Tyrosine 253 serves as a coordination point for substrate. Glutamate 293 functions as the Nucleophile in the catalytic mechanism. Substrate is bound at residue tryptophan 335.

Belongs to the glycosyl hydrolase 5 (cellulase A) family. As to expression, expressed in stems and leaves and seeds.

It catalyses the reaction Random hydrolysis of (1-&gt;4)-beta-D-mannosidic linkages in mannans, galactomannans and glucomannans.. This Oryza sativa subsp. japonica (Rice) protein is Mannan endo-1,4-beta-mannosidase 8 (MAN8).